A 432-amino-acid polypeptide reads, in one-letter code: Adenylosuccinate synthetase (432 aa).

GTP is bound by residues 12–18 (GDEGKGK) and 40–42 (GHT). Aspartate 13 acts as the Proton acceptor in catalysis. Residues aspartate 13 and glycine 40 each coordinate Mg(2+). Residues 13-16 (DEGK), 38-41 (NAGH), threonine 129, arginine 143, glutamine 224, threonine 239, and arginine 303 contribute to the IMP site. Residue histidine 41 is the Proton donor of the active site. 299-305 (VTTGRRR) lines the substrate pocket. GTP contacts are provided by residues arginine 305, 331–333 (KLD), and 413–415 (GVG).

Belongs to the adenylosuccinate synthetase family. Homodimer. The cofactor is Mg(2+).

The protein localises to the cytoplasm. The enzyme catalyses IMP + L-aspartate + GTP = N(6)-(1,2-dicarboxyethyl)-AMP + GDP + phosphate + 2 H(+). Its pathway is purine metabolism; AMP biosynthesis via de novo pathway; AMP from IMP: step 1/2. Plays an important role in the de novo pathway of purine nucleotide biosynthesis. Catalyzes the first committed step in the biosynthesis of AMP from IMP. The sequence is that of Adenylosuccinate synthetase from Mycobacterium leprae (strain TN).